The sequence spans 151 residues: Deoxyuridine 5'-triphosphate nucleotidohydrolase (151 aa).

Residues 70 to 72 (RSG), N83, 87 to 89 (LID), and M97 each bind substrate.

This sequence belongs to the dUTPase family. Mg(2+) is required as a cofactor.

It catalyses the reaction dUTP + H2O = dUMP + diphosphate + H(+). Its pathway is pyrimidine metabolism; dUMP biosynthesis; dUMP from dCTP (dUTP route): step 2/2. Functionally, this enzyme is involved in nucleotide metabolism: it produces dUMP, the immediate precursor of thymidine nucleotides and it decreases the intracellular concentration of dUTP so that uracil cannot be incorporated into DNA. This Salmonella enteritidis PT4 (strain P125109) protein is Deoxyuridine 5'-triphosphate nucleotidohydrolase.